A 111-amino-acid chain; its full sequence is Small ribosomal subunit protein mS38 (111 aa).

Over residues 82–99 (RKRKKKMKKHKLRKRRKR) the composition is skewed to basic residues. The segment at 82-111 (RKRKKKMKKHKLRKRRKREKAERRKLSQGR) is disordered. The span at 100-111 (EKAERRKLSQGR) shows a compositional bias: basic and acidic residues.

This sequence belongs to the mitochondrion-specific ribosomal protein mS38 family. In terms of assembly, component of the mitochondrial small ribosomal subunit (mt-SSU). Mature yeast 74S mitochondrial ribosomes consist of a small (37S) and a large (54S) subunit. The 37S small subunit contains a 15S ribosomal RNA (15S mt-rRNA) and 34 different proteins. The 54S large subunit contains a 21S rRNA (21S mt-rRNA) and 46 different proteins.

It is found in the mitochondrion. The protein localises to the mitochondrion inner membrane. In terms of biological role, component of the mitochondrial ribosome (mitoribosome), a dedicated translation machinery responsible for the synthesis of mitochondrial genome-encoded proteins, including at least some of the essential transmembrane subunits of the mitochondrial respiratory chain. The mitoribosomes are attached to the mitochondrial inner membrane and translation products are cotranslationally integrated into the membrane. mS38 is also involved in the splicing of the COX1 mRNA. This is Small ribosomal subunit protein mS38 (QRI5) from Saccharomyces cerevisiae (strain ATCC 204508 / S288c) (Baker's yeast).